A 338-amino-acid chain; its full sequence is uncharacterized protein (338 aa).

Residues 20–40 (IFFTLTFSLSNLFLAICYLFL) form a helical membrane-spanning segment.

It is found in the membrane. This is an uncharacterized protein from Schizosaccharomyces pombe (strain 972 / ATCC 24843) (Fission yeast).